A 216-amino-acid chain; its full sequence is Acetate CoA-transferase subunit beta (216 aa).

Glutamate 46 is an active-site residue.

Belongs to the 3-oxoacid CoA-transferase subunit B family. In terms of assembly, heterotetramer composed of two alpha subunits (AtoD) and two beta subunits (AtoA).

Its subcellular location is the cytoplasm. The enzyme catalyses an acyl-CoA + acetate = a carboxylate + acetyl-CoA. The catalysed reaction is acetoacetate + acetyl-CoA = acetoacetyl-CoA + acetate. It carries out the reaction butanoate + acetyl-CoA = butanoyl-CoA + acetate. It catalyses the reaction acetoacetate + butanoyl-CoA = acetoacetyl-CoA + butanoate. Its pathway is lipid metabolism; short-chain fatty acid metabolism. Its activity is regulated as follows. Inhibited by p-chloromercuribenzoate. Coenzyme A transferase which is involved in short-chain fatty acid degradation and catalyzes the activation of short-chain fatty acids to their respective CoA thiolesters. During acetoacetate degradation, catalyzes the transfer of CoA from acetyl-CoA to acetoacetate by a mechanism involving a covalent enzyme-CoA compound as a reaction intermediate. Utilizes a variety of short chain acyl-CoA and carboxylic acid substrates but exhibits maximal activity with normal and 3-keto substrates. This chain is Acetate CoA-transferase subunit beta, found in Escherichia coli (strain K12).